Here is a 492-residue protein sequence, read N- to C-terminus: N-succinylglutamate 5-semialdehyde dehydrogenase (492 aa).

220–225 lines the NAD(+) pocket; that stretch reads GSASTG. Catalysis depends on residues E243 and C277.

This sequence belongs to the aldehyde dehydrogenase family. AstD subfamily.

The enzyme catalyses N-succinyl-L-glutamate 5-semialdehyde + NAD(+) + H2O = N-succinyl-L-glutamate + NADH + 2 H(+). It functions in the pathway amino-acid degradation; L-arginine degradation via AST pathway; L-glutamate and succinate from L-arginine: step 4/5. Functionally, catalyzes the NAD-dependent reduction of succinylglutamate semialdehyde into succinylglutamate. This is N-succinylglutamate 5-semialdehyde dehydrogenase from Salmonella dublin (strain CT_02021853).